The chain runs to 141 residues: uncharacterized protein (141 aa).

Residues 114 to 134 (ILFTCYIQSFSLLISNFFIAI) form a helical membrane-spanning segment.

It is found in the membrane. This is an uncharacterized protein from Schizosaccharomyces pombe (strain 972 / ATCC 24843) (Fission yeast).